A 212-amino-acid chain; its full sequence is MEAKTLGTVTPRKPVLSVSARKIKDNAADWHNLILKWETLNDAGFTTANNIANLKISLLNKDKIELDSSSPASKENEEKVCLEYNEELEKLCEELQATLDGLTKIQVKMEKLSSTTKGICELENYHYGEESKRPPLFHTWPTTHFYEVSHKLLEMYRKELLLKRTVAKELAHTGDPDLTLSYLSMWLHQPYVESDSRLHLESMLLETGHRAL.

Position 1 is an N-acetylmethionine (Met-1). Phosphoserine is present on residues Ser-69 and Ser-73. Residues 73 to 107 (SKENEEKVCLEYNEELEKLCEELQATLDGLTKIQV) adopt a coiled-coil conformation. Ser-202 provides a ligand contact to Na(+).

Belongs to the CINP family. Homodimer. Part of the 55LCC heterohexameric ATPase complex composed at least of AIRIM, AFG2A, AFG2B and CINP. Interacts with AIRIM. Interacts with CDK2 and CDC7. Interacts with the components of the replication complex, MCM2, MCM3, MCM4, MCM5, MCM6, MCM7 and with ORC2-containing complexes. Interacts with ATRIP. Interacts with CEP152. Associates with pre-60S ribosomal particles. In terms of processing, phosphorylated by CDC7 but not by CDK2.

It localises to the nucleus. Component of the DNA replication complex, which interacts with two kinases, CDK2 and CDC7, thereby providing a functional and physical link between CDK2 and CDC7 during firing of the origins of replication. Regulates ATR-mediated checkpoint signaling in response to DNA damage. Part of the 55LCC heterohexameric ATPase complex which is chromatin-associated and promotes replisome proteostasis to maintain replication fork progression and genome stability. Required for replication fork progression, sister chromatid cohesion, and chromosome stability. The ATPase activity is specifically enhanced by replication fork DNA and is coupled to cysteine protease-dependent cleavage of replisome substrates in response to replication fork damage. Uses ATPase activity to process replisome substrates in S-phase, facilitating their proteolytic turnover from chromatin to ensure DNA replication and mitotic fidelity. As part of 55LCC complex, also involved in the cytoplasmic maturation steps of pre-60S ribosomal particles by promoting the release of shuttling protein RSL24D1/RLP24 from the pre-ribosomal particles. This is Cyclin-dependent kinase 2-interacting protein from Homo sapiens (Human).